Consider the following 347-residue polypeptide: MSKKIKAGIVGATGYTGVELLRLLAAHPDVEVAAVTSRSEAGTAVADYFPSLRGVYGLAFQTPDEAGLEQCDIVFFATPNGIAMKDAPRLLEQGVRVIDLSADFRIRDIPTWEHWYGMTHAAPGLVSQAVYGLSELNREAVAQARLVANPGCYPTCVSLPLVPLLRQCRLKPGMPLIADCKSGVSGAGRKGNVGSLLCEAGDNFKAYGTAGHRHLPEIRQTIAGLQDGIAEGFVFTPHLAPMIRGMHATVYLHLSDGSDPETVLRDYYRDSPFMDILPAGSTPETRSVRGANLCRISIRQAAQSDVWVVLSVIDNLVKGAAGQAVQNMNIMFGLEETHGLDAIPLLP.

The active site involves Cys-152.

This sequence belongs to the NAGSA dehydrogenase family. Type 1 subfamily.

It is found in the cytoplasm. The catalysed reaction is N-acetyl-L-glutamate 5-semialdehyde + phosphate + NADP(+) = N-acetyl-L-glutamyl 5-phosphate + NADPH + H(+). Its pathway is amino-acid biosynthesis; L-arginine biosynthesis; N(2)-acetyl-L-ornithine from L-glutamate: step 3/4. Functionally, catalyzes the NADPH-dependent reduction of N-acetyl-5-glutamyl phosphate to yield N-acetyl-L-glutamate 5-semialdehyde. This is N-acetyl-gamma-glutamyl-phosphate reductase from Neisseria gonorrhoeae (strain ATCC 700825 / FA 1090).